The sequence spans 80 residues: Putative membrane protein insertion efficiency factor (80 aa).

The protein belongs to the UPF0161 family.

The protein resides in the cell inner membrane. Its function is as follows. Could be involved in insertion of integral membrane proteins into the membrane. The chain is Putative membrane protein insertion efficiency factor from Syntrophobacter fumaroxidans (strain DSM 10017 / MPOB).